The sequence spans 240 residues: uncharacterized protein (240 aa).

The interval 93–160 (QEASGCTVGE…AGGGAAASGQ (68 aa)) is disordered. 2 stretches are compositionally biased toward low complexity: residues 110–119 (AQPSQPAQGG) and 129–150 (GGAEEAGGAQASQPAESAPAEN).

This is an uncharacterized protein from Streptomyces viridochromogenes.